Consider the following 361-residue polypeptide: ETS translocation variant 3-like protein (361 aa).

The segment at residues 39-120 (IQLWHFILEL…KGKRFTYKFN (82 aa)) is a DNA-binding region (ETS). The segment at 178–201 (LTGQQTPRGPPETSGDKKGSSSSV) is disordered.

The protein belongs to the ETS family.

The protein localises to the nucleus. Functionally, transcriptional regulator. The protein is ETS translocation variant 3-like protein (ETV3L) of Homo sapiens (Human).